The sequence spans 29 residues: GSAFCGETCVLGTCYTPDCSCTALVCLKN.

A cross-link (cyclopeptide (Gly-Asn)) is located at residues 1 to 29 (GSAFCGETCVLGTCYTPDCSCTALVCLKN). Cystine bridges form between Cys-5-Cys-19, Cys-9-Cys-21, and Cys-14-Cys-26.

In terms of processing, this is a cyclic peptide.

Its subcellular location is the secreted. Probably participates in a plant defense mechanism. The protein is Cyclotide cter-N of Clitoria ternatea (Butterfly pea).